We begin with the raw amino-acid sequence, 379 residues long: RING finger protein 215 (379 aa).

Disordered regions lie at residues methionine 1–proline 21 and alanine 44–arginine 63. Residues methionine 1–proline 24 are Cytoplasmic-facing. The chain crosses the membrane as a helical span at residues leucine 25 to alanine 45. Over aspartate 46–proline 252 the chain is Extracellular. An N-linked (GlcNAc...) asparagine glycan is attached at asparagine 188. A helical membrane pass occupies residues leucine 253–valine 273. Topologically, residues glutamine 274–aspartate 379 are cytoplasmic. An RING-type; atypical zinc finger spans residues cysteine 327–lysine 368.

Its subcellular location is the membrane. The protein is RING finger protein 215 (Rnf215) of Mus musculus (Mouse).